A 125-amino-acid polypeptide reads, in one-letter code: Histone H2A.v3 (125 aa).

The protein belongs to the histone H2A family. In terms of assembly, the nucleosome is a histone octamer containing two molecules each of H2A, H2B, H3 and H4 assembled in one H3-H4 heterotetramer and two H2A-H2B heterodimers. The octamer wraps approximately 147 bp of DNA.

The protein localises to the nucleus. It localises to the chromosome. Core component of nucleosome which plays a central role in DNA double strand break (DSB) repair. Nucleosomes wrap and compact DNA into chromatin, limiting DNA accessibility to the cellular machineries which require DNA as a template. Histones thereby play a central role in transcription regulation, DNA repair, DNA replication and chromosomal stability. DNA accessibility is regulated via a complex set of post-translational modifications of histones, also called histone code, and nucleosome remodeling. In Dictyostelium discoideum (Social amoeba), this protein is Histone H2A.v3 (H2Av3).